The chain runs to 409 residues: Evolutionarily conserved signaling intermediate in Toll pathway, mitochondrial (409 aa).

Residues 1–26 (MLRRAQCLLRLHGNGGHSLVSRFRNY) constitute a mitochondrion transit peptide. 2 disordered regions span residues 27–53 (ATDE…NLPA) and 383–409 (EEIE…SRQK). The span at 400–409 (QDEHISSRQK) shows a compositional bias: basic and acidic residues.

Belongs to the ECSIT family. As to quaternary structure, interacts with Traf6. Associates with mitochondrial complex I assembly intermediates during its biogenesis.

The protein localises to the cytoplasm. It localises to the nucleus. It is found in the mitochondrion. As part of the MCIA complex, involved in the assembly of the mitochondrial complex I. Involved in the innate immune response; promotes the production of antibacterial peptides. This chain is Evolutionarily conserved signaling intermediate in Toll pathway, mitochondrial, found in Drosophila melanogaster (Fruit fly).